A 238-amino-acid polypeptide reads, in one-letter code: DNA repair protein RecO (238 aa).

This sequence belongs to the RecO family.

Its function is as follows. Involved in DNA repair and RecF pathway recombination. The sequence is that of DNA repair protein RecO from Aliivibrio salmonicida (strain LFI1238) (Vibrio salmonicida (strain LFI1238)).